Consider the following 319-residue polypeptide: Tetrahydromethanopterin S-methyltransferase subunit H (319 aa).

The protein belongs to the MtrH family. As to quaternary structure, the complex is composed of 8 subunits; MtrA, MtrB, MtrC, MtrD, MtrE, MtrF, MtrG and MtrH.

It carries out the reaction 5-methyl-5,6,7,8-tetrahydromethanopterin + coenzyme M + 2 Na(+)(in) = 5,6,7,8-tetrahydromethanopterin + methyl-coenzyme M + 2 Na(+)(out). It participates in one-carbon metabolism; methanogenesis from CO(2); methyl-coenzyme M from 5,10-methylene-5,6,7,8-tetrahydromethanopterin: step 2/2. Its function is as follows. Part of a complex that catalyzes the formation of methyl-coenzyme M and tetrahydromethanopterin from coenzyme M and methyl-tetrahydromethanopterin. This is an energy-conserving, sodium-ion translocating step. MtrH catalyzes the transfer of the methyl group from methyl-tetrahydromethanopterin to the corrinoid prosthetic group of MtrA. This chain is Tetrahydromethanopterin S-methyltransferase subunit H, found in Methanococcus vannielii (strain ATCC 35089 / DSM 1224 / JCM 13029 / OCM 148 / SB).